We begin with the raw amino-acid sequence, 536 residues long: L-aspartate oxidase 2 (536 aa).

FAD-binding positions include 22–25 and 51–58; these read EGLA and SSYWAQGG. Arg-284 acts as the Proton donor/acceptor in catalysis. Residues Glu-369 and 385–386 each bind FAD; that span reads SL.

The protein belongs to the FAD-dependent oxidoreductase 2 family. NadB subfamily. FAD serves as cofactor.

It localises to the cytoplasm. The catalysed reaction is L-aspartate + O2 = iminosuccinate + H2O2. It functions in the pathway cofactor biosynthesis; NAD(+) biosynthesis; iminoaspartate from L-aspartate (oxidase route): step 1/1. In terms of biological role, catalyzes the oxidation of L-aspartate to iminoaspartate, the first step in the de novo biosynthesis of NAD(+). This is L-aspartate oxidase 2 (nadB2) from Ralstonia nicotianae (strain ATCC BAA-1114 / GMI1000) (Ralstonia solanacearum).